The sequence spans 320 residues: Serpentine receptor class delta-28 (320 aa).

Helical transmembrane passes span 5-25, 38-58, 83-103, 122-142, 176-196, 230-250, and 258-278; these read LLHT…MYLA, AIIT…FFVM, ACYI…IWMI, SLVF…ATWI, LTLI…YAWI, FLPS…TQLI, and LVSV…ILFV.

It belongs to the nematode receptor-like protein srd family.

It localises to the membrane. This chain is Serpentine receptor class delta-28 (srd-28), found in Caenorhabditis elegans.